Consider the following 411-residue polypeptide: Peptidyl-prolyl cis-trans isomerase (411 aa).

At serine 2 the chain carries N-acetylserine. Disordered regions lie at residues 54 to 127 (IIKR…TLSP) and 160 to 302 (NYVK…PKSK). A compositionally biased stretch (acidic residues) spans 61–87 (FEDDDFLGGDFDEDEIDEESSEEEEEE). Residues serine 80 and serine 81 each carry the phosphoserine modification. Threonine 89 bears the Phosphothreonine mark. Acidic residues-rich tracts occupy residues 103 to 118 (ESED…DEFQ) and 173 to 242 (EGED…EEQK). Residue tyrosine 184 is modified to Phosphotyrosine; by CK2. The residue at position 186 (serine 186) is a Phosphoserine; by CK2. Basic residues predominate over residues 251–260 (KSKKEKKRKH). A Nuclear localization signal motif is present at residues 256 to 271 (KKRKHEEKEEEKKAKK). Positions 261–296 (EEKEEEKKAKKVKKVEFKKDLEEGPTKPKSKKEQDK) are enriched in basic and acidic residues. The region spanning 324 to 411 (GARVGMRYIG…FDVKLVSMKN (88 aa)) is the PPIase FKBP-type domain.

Belongs to the FKBP-type PPIase family. FKBP3/4 subfamily. Interacts with NOP53. Phosphorylated at tyrosine and dephosphorylated by the phosphotyrosine-specific phosphoprotein phosphatase PTP1.

It is found in the nucleus. Its subcellular location is the nucleolus. The catalysed reaction is [protein]-peptidylproline (omega=180) = [protein]-peptidylproline (omega=0). Its activity is regulated as follows. Inhibited by both FK506 and rapamycin. Functionally, proline isomerase that belongs to an abundant class of enzymes that catalyze the cis-trans isomerization of X-Pro peptide bonds and can accelerate the refolding of proline-containing polypeptides. Specifically binds nuclear localization sequences. May be involved in the assembly or folding of ribosomal proteins. This chain is Peptidyl-prolyl cis-trans isomerase, found in Saccharomyces cerevisiae (strain ATCC 204508 / S288c) (Baker's yeast).